We begin with the raw amino-acid sequence, 278 residues long: uncharacterized protein (278 aa).

This is an uncharacterized protein from Methanocaldococcus jannaschii (strain ATCC 43067 / DSM 2661 / JAL-1 / JCM 10045 / NBRC 100440) (Methanococcus jannaschii).